Consider the following 501-residue polypeptide: ATP synthase subunit alpha (501 aa).

Glycine 169–threonine 176 is an ATP binding site.

It belongs to the ATPase alpha/beta chains family. In terms of assembly, F-type ATPases have 2 components, CF(1) - the catalytic core - and CF(0) - the membrane proton channel. CF(1) has five subunits: alpha(3), beta(3), gamma(1), delta(1), epsilon(1). CF(0) has three main subunits: a(1), b(2) and c(9-12). The alpha and beta chains form an alternating ring which encloses part of the gamma chain. CF(1) is attached to CF(0) by a central stalk formed by the gamma and epsilon chains, while a peripheral stalk is formed by the delta and b chains.

Its subcellular location is the cell membrane. The catalysed reaction is ATP + H2O + 4 H(+)(in) = ADP + phosphate + 5 H(+)(out). Functionally, produces ATP from ADP in the presence of a proton gradient across the membrane. The alpha chain is a regulatory subunit. The polypeptide is ATP synthase subunit alpha (Streptococcus gordonii (strain Challis / ATCC 35105 / BCRC 15272 / CH1 / DL1 / V288)).